The chain runs to 153 residues: UPF0178 protein MXAN_5526 (153 aa).

This sequence belongs to the UPF0178 family.

The polypeptide is UPF0178 protein MXAN_5526 (Myxococcus xanthus (strain DK1622)).